Here is a 214-residue protein sequence, read N- to C-terminus: Uracil phosphoribosyltransferase (214 aa).

Residues Arg-107 and 135 to 143 contribute to the 5-phospho-alpha-D-ribose 1-diphosphate site; that span reads DPMLATGKT. Uracil contacts are provided by residues Ile-198 and 203–205; that span reads GDA. 5-phospho-alpha-D-ribose 1-diphosphate is bound at residue Asp-204.

This sequence belongs to the UPRTase family. Mg(2+) serves as cofactor.

The catalysed reaction is UMP + diphosphate = 5-phospho-alpha-D-ribose 1-diphosphate + uracil. The protein operates within pyrimidine metabolism; UMP biosynthesis via salvage pathway; UMP from uracil: step 1/1. Its activity is regulated as follows. Allosterically activated by GTP. Functionally, catalyzes the conversion of uracil and 5-phospho-alpha-D-ribose 1-diphosphate (PRPP) to UMP and diphosphate. The sequence is that of Uracil phosphoribosyltransferase from Aeropyrum pernix (strain ATCC 700893 / DSM 11879 / JCM 9820 / NBRC 100138 / K1).